A 251-amino-acid chain; its full sequence is uncharacterized protein (251 aa).

An N-terminal signal peptide occupies residues 1–25; sequence MSAGRLNKKSLGIVMLLSVGLLLAG. The N-palmitoyl cysteine moiety is linked to residue C26. A lipid anchor (S-diacylglycerol cysteine) is attached at C26. One can recognise a LysM domain in the interval 40–84; it reads SVYTVKRGDTLYRISRTTGTSVKELARLNGISPPYTIEVGQKLKL. Residues 93 to 112 are compositionally biased toward low complexity; that stretch reads TRKSTAKSTTKTASVTPSSA. The tract at residues 93-115 is disordered; it reads TRKSTAKSTTKTASVTPSSAVPK.

It belongs to the peptidase M23B family.

It localises to the cell inner membrane. This is an uncharacterized protein from Escherichia coli (strain K12).